Here is a 2559-residue protein sequence, read N- to C-terminus: Ubiquitin carboxyl-terminal hydrolase 9X (2559 aa).

Residues 1-44 (MTATTRGSPVGGNDNQGQAPDGQSQPPLQQNQTSSPDSSNENSP) are compositionally biased toward polar residues. The disordered stretch occupies residues 1 to 64 (MTATTRGSPV…DAPPQIEDEE (64 aa)). Ser-374, Ser-375, and Ser-588 each carry phosphoserine. The tract at residues 967–999 (QISSNMPSSPDSSSDSSTGSPGNHGNHYSDGPN) is disordered. The span at 969–989 (SSNMPSSPDSSSDSSTGSPGN) shows a compositional bias: low complexity. Positions 1557 to 1956 (VGLKNAGATC…NAYILFYERM (400 aa)) constitute a USP domain. Cys-1566 acts as the Nucleophile in catalysis. Positions 1592–1633 (GSDVDDDMSGDEKQDNESNVDPRDDVFGYPQQFEDKPPLSKT) are disordered. Ser-1600 carries the phosphoserine modification. 2 stretches are compositionally biased toward basic and acidic residues: residues 1601 to 1617 (GDEKQDNESNVDPRDDV) and 1624 to 1633 (FEDKPPLSKT). Zn(2+) is bound by residues Cys-1727, His-1729, Cys-1771, and Cys-1774. The active-site Proton acceptor is the His-1879. A Phosphoserine modification is found at Ser-2443. Acidic residues predominate over residues 2475–2484 (PEEEPDDQDA). The segment at 2475–2559 (PEEEPDDQDA…QTKGSVKCTY (85 aa)) is disordered. Polar residues-rich tracts occupy residues 2503-2513 (PGSQYQQNNHV) and 2527-2537 (NNPQRTGQRAQ). Residue Tyr-2540 is modified to Phosphotyrosine. A Phosphoserine modification is found at Ser-2547. At Thr-2551 the chain carries Phosphothreonine.

The protein belongs to the peptidase C19 family. In terms of assembly, interacts with SMAD4, MARK4, NUAK1 and BIRC5/survivin. Interacts with DCX. Interacts with OTUD4 and USP7; the interaction is direct. As to expression, highest levels in liver and brain with expression also detected in heart, muscle, spleen and kidney (at protein leve). Ubiquitously expressed in adult tissues.

It is found in the cytoplasm. The protein localises to the cytosol. Its subcellular location is the cell projection. The protein resides in the growth cone. It localises to the cytoskeleton. It is found in the cilium axoneme. It catalyses the reaction Thiol-dependent hydrolysis of ester, thioester, amide, peptide and isopeptide bonds formed by the C-terminal Gly of ubiquitin (a 76-residue protein attached to proteins as an intracellular targeting signal).. Its function is as follows. Deubiquitinase involved both in the processing of ubiquitin precursors and of ubiquitinated proteins. May therefore play an important regulatory role at the level of protein turnover by preventing degradation of proteins through the removal of conjugated ubiquitin. Specifically hydrolyzes 'Lys-11'-, followed by 'Lys-63'-, 'Lys-48'- and 'Lys-6'-linked polyubiquitins chains. Essential component of TGF-beta/BMP signaling cascade. Specifically deubiquitinates monoubiquitinated SMAD4, opposing the activity of E3 ubiquitin-protein ligase TRIM33. Deubiquitinates alkylation repair enzyme ALKBH3. OTUD4 recruits USP7 and USP9X to stabilize ALKBH3, thereby promoting the repair of alkylated DNA lesions. Deubiquitinates RNA demethylase enzyme ALKBH5, promoting its stability. Deubiquitinates mTORC2 complex component RICTOR at 'Lys-294' by removing 'Lys-63'-linked polyubiquitin chains, stabilizing RICTOR and enhancing its binding to MTOR, thus promoting mTORC2 complex assembly. Regulates chromosome alignment and segregation in mitosis by regulating the localization of BIRC5/survivin to mitotic centromeres. Involved in axonal growth and neuronal cell migration. Regulates cellular clock function by enhancing the protein stability and transcriptional activity of the core circadian protein BMAL1 via its deubiquitinating activity. Acts as a regulator of peroxisome import by mediating deubiquitination of PEX5: specifically deubiquitinates PEX5 monoubiquitinated at 'Cys-11' following its retrotranslocation into the cytosol, resetting PEX5 for a subsequent import cycle. Deubiquitinates PEG10. Inhibits the activation of the Hippo signaling pathway via deubiquitination of AMOTL2 at 'Lys-337' and 'Lys-404' which prohibits its interaction with and activation of LATS2. Loss of LATS2 activation and subsequent loss of YAP1 phosphorylation results in an increase in YAP1-driven transcription of target genes. This Mus musculus (Mouse) protein is Ubiquitin carboxyl-terminal hydrolase 9X.